A 130-amino-acid chain; its full sequence is Small ribosomal subunit protein uS8 (130 aa).

This sequence belongs to the universal ribosomal protein uS8 family. Part of the 30S ribosomal subunit.

One of the primary rRNA binding proteins, it binds directly to 16S rRNA central domain where it helps coordinate assembly of the platform of the 30S subunit. The chain is Small ribosomal subunit protein uS8 from Thermococcus kodakarensis (strain ATCC BAA-918 / JCM 12380 / KOD1) (Pyrococcus kodakaraensis (strain KOD1)).